The following is a 449-amino-acid chain: Tryptophan--tRNA ligase (449 aa).

ATP is bound by residues 10 to 12 (TTT) and 18 to 19 (GN). The short motif at 11 to 19 (TTGTPHLGN) is the 'HIGH' region element. Residue Asp143 coordinates L-tryptophan. ATP is bound by residues 155–157 (GRD), Leu197, and 204–208 (KMSKS). Residues 204–208 (KMSKS) carry the 'KMSKS' region motif.

Belongs to the class-I aminoacyl-tRNA synthetase family. As to quaternary structure, homodimer.

It localises to the cytoplasm. It catalyses the reaction tRNA(Trp) + L-tryptophan + ATP = L-tryptophyl-tRNA(Trp) + AMP + diphosphate + H(+). Catalyzes the attachment of tryptophan to tRNA(Trp). The polypeptide is Tryptophan--tRNA ligase (Pseudomonas syringae pv. tomato (strain ATCC BAA-871 / DC3000)).